Here is a 1113-residue protein sequence, read N- to C-terminus: Coiled-coil domain-containing protein 158 (1113 aa).

Polar residues predominate over residues 1 to 14 (MESKAWESNNEDLL). A disordered region spans residues 1-26 (MESKAWESNNEDLLSSSGVTSNGGSS). Residues 15–26 (SSSGVTSNGGSS) are compositionally biased toward low complexity. Coiled-coil stretches lie at residues 72–183 (GKEH…LSHE) and 243–833 (VEDQ…QEQE). 2 disordered regions span residues 848-902 (LQGP…DPTR) and 955-1062 (CHRS…IETT). Polar residues-rich tracts occupy residues 867–894 (ASVT…TKAN), 955–974 (CHRS…SSET), 994–1017 (FTFT…SSPK), 1024–1040 (LLTS…SQYR), and 1053–1062 (DSQSPPIETT). Residues 1061–1113 (TTGKTCRKLQNRLESLQTLVEDLQLKNQAMSSMIRNQEKRIQKVKDQEKMLLK) adopt a coiled-coil conformation.

This is Coiled-coil domain-containing protein 158 (CCDC158) from Homo sapiens (Human).